The primary structure comprises 729 residues: MRSVVLVALAAAIGNMLQGWDNATIAGAVIYIKKEFHLEKEPKIEGLIVAMSLIGATLITTFSGPVSDKVGRRSMLILSSVLYFLSSIVMFWSPNVYVLLFARLLDGFGIGLAVTLVPIYISETAPSEIRGLLNTFPQFCGSGGMFLSYCLVFGMSLQESPSWRLMLGVLSIPSIAYFVLAAFFLPESPRWLVSKGRMDEARQVLQRLRGREDVSGELALLVEGLGVGKDTSIEEYVIGPDNEENEGGNELPRKDQIKLYGPEDGQSWMAKPVKGQSSLALASRQGSMLPRGGSLMDPLVTLFGSIHENLPSENMNASSRSMLFPNMGSILGMMGRQESQWDPERNNEDSSDQDENLNSPLLSPQTTEPDDYHQRTVGTMHRRQSSLFMANVGETATATSIGGGWQLAWKYNDKVGADGKRVNGGLQRMYIHEETANNNTNNIPFSRRGSLLSFHPEGDGHDQVNGYVQAAALVSQASMMPGGKGETAMLPKEVKDGPGWRELKEPGVKRALMVGVGLQILQQFAGINGVMYYTPQILEETGVSSLLTNLGISAESASLLISALTTLLMLPCILVSMRSLMLSTIPILILSLVTLVIGSLVNLGGSINALISTASVTVYLSCFVMGFGAIPNILCSEIFPTSVRGLCITICALTFWICDIIVTYTLPVMLKSIGIAGVFGIYAIVCAVAWVFVYLKVPETKGMPLEVISEFFSVGAKQQDAAASFLSDG.

6 consecutive transmembrane segments (helical) span residues 5–25 (VLVALAAAIGNMLQGWDNATI), 46–66 (GLIVAMSLIGATLITTFSGPV), 81–101 (VLYFLSSIVMFWSPNVYVLLF), 104–124 (LLDGFGIGLAVTLVPIYISET), 135–155 (TFPQFCGSGGMFLSYCLVFGM), and 165–185 (LMLGVLSIPSIAYFVLAAFFL). Residues 337-372 (QESQWDPERNNEDSSDQDENLNSPLLSPQTTEPDDY) form a disordered region. The span at 356–367 (NLNSPLLSPQTT) shows a compositional bias: polar residues. Serine 446 is modified (phosphoserine). 6 helical membrane passes run 511–531 (ALMVGVGLQILQQFAGINGVM), 557–577 (ASLLISALTTLLMLPCILVSM), 581–601 (MLSTIPILILSLVTLVIGSLV), 610–630 (LISTASVTVYLSCFVMGFGAI), 650–670 (ICALTFWICDIIVTYTLPVML), and 673–693 (IGIAGVFGIYAIVCAVAWVFV).

This sequence belongs to the major facilitator superfamily. Sugar transporter (TC 2.A.1.1) family. Weakly expressed.

The protein localises to the vacuole membrane. It catalyses the reaction D-glucose(out) + H(+)(in) = D-glucose(in) + H(+)(out). The enzyme catalyses sucrose(out) + H(+)(in) = sucrose(in) + H(+)(out). In terms of biological role, sugar proton-coupled antiporter which contributes to vacuolar sugar import (e.g. monosaccharides including glucose,sucrose and fructose), particularly during stress responses (e.g. in response to cold). The polypeptide is Monosaccharide-sensing protein 3 (Arabidopsis thaliana (Mouse-ear cress)).